We begin with the raw amino-acid sequence, 195 residues long: Exosome complex component CSL4 (195 aa).

Residue serine 21 is modified to Phosphoserine. Positions 66–147 (DVGAVVTCKV…AQSNYLLTTA (82 aa)) constitute an S1 motif domain.

The protein belongs to the CSL4 family. In terms of assembly, component of the RNA exosome core complex (Exo-9), composed of EXOSC1, EXOSC2, EXOSC3, EXOSC4, EXOSC5, EXOSC6, EXOSC7, EXOSC8 and EXOSC9; within the complex interacts with EXOSC6. The catalytically inactive RNA exosome core complex (Exo-9) associates with the catalytic subunit EXOSC10/RRP6. Exo-9 may associate with DIS3 to form the nucleolar exosome complex, or DIS3L to form the cytoplasmic exosome complex. Exo-9 is formed by a hexameric base ring consisting of the heterodimers EXOSC4-EXOSC9, EXOSC5-EXOSC8 and EXOSC6-EXOSC7, and a cap ring consisting of EXOSC1, EXOSC2 and EXOSC3. The RNA exosome complex associates with cofactors C1D/RRP47, MPHOSPH6/MPP6 and MTREX/MTR4. Interacts with DDX60.

It localises to the nucleus. Its subcellular location is the nucleolus. It is found in the cytoplasm. Its function is as follows. Non-catalytic component of the RNA exosome complex which has 3'-&gt;5' exoribonuclease activity and participates in a multitude of cellular RNA processing and degradation events. In the nucleus, the RNA exosome complex is involved in proper maturation of stable RNA species such as rRNA, snRNA and snoRNA, in the elimination of RNA processing by-products and non-coding 'pervasive' transcripts, such as antisense RNA species and promoter-upstream transcripts (PROMPTs), and of mRNAs with processing defects, thereby limiting or excluding their export to the cytoplasm. The RNA exosome may be involved in Ig class switch recombination (CSR) and/or Ig variable region somatic hypermutation (SHM) by targeting AICDA deamination activity to transcribed dsDNA substrates. In the cytoplasm, the RNA exosome complex is involved in general mRNA turnover and specifically degrades inherently unstable mRNAs containing AU-rich elements (AREs) within their 3' untranslated regions, and in RNA surveillance pathways, preventing translation of aberrant mRNAs. It seems to be involved in degradation of histone mRNA. The catalytic inactive RNA exosome core complex of 9 subunits (Exo-9) is proposed to play a pivotal role in the binding and presentation of RNA for ribonucleolysis, and to serve as a scaffold for the association with catalytic subunits and accessory proteins or complexes. EXOSC1 as peripheral part of the Exo-9 complex stabilizes the hexameric ring of RNase PH-domain subunits through contacts with EXOSC6 and EXOSC8. The sequence is that of Exosome complex component CSL4 (Exosc1) from Mus musculus (Mouse).